A 244-amino-acid polypeptide reads, in one-letter code: Derlin-2.1 (244 aa).

The Cytoplasmic segment spans residues 1–21 (MAQAVEEWYKQMPIITRSYLT). The helical transmembrane segment at 22 to 42 (AAVVTTVGCSLEIISPYNLYL) threads the bilayer. The Lumenal portion of the chain corresponds to 43 to 96 (NPTLVVKQYQFWRLVTNFLYFRKMDLDFLFHMFFLARYCKLLEENSFRGKTADF). Residues 97-117 (LYMLLFGATVLTGIVLIGGMI) traverse the membrane as a helical segment. At 118-121 (PYLS) the chain is on the cytoplasmic side. A helical transmembrane segment spans residues 122 to 142 (VSFSKIIFLSNSLTFMMVYVW). Over 143-152 (SKQNPYIHMS) the chain is Lumenal. The helical transmembrane segment at 153 to 173 (FLGLFTFTAAYLPWVLLGFSI) threads the bilayer. At 174–244 (LVGASAWGDF…HAPFDEIHQD (71 aa)) the chain is on the cytoplasmic side.

Belongs to the derlin family.

It localises to the endoplasmic reticulum membrane. May be involved in the degradation process of specific misfolded endoplasmic reticulum (ER) luminal proteins. This Arabidopsis thaliana (Mouse-ear cress) protein is Derlin-2.1 (DER2.1).